The sequence spans 576 residues: Probable vesicular glutamate transporter eat-4 (576 aa).

Over 1–69 (MSSWNEAWDR…QTWIGKCRKR (69 aa)) the chain is Cytoplasmic. The interval 25–46 (AAASATGAAPPQQMQEEGNENP) is disordered. Residues 36-46 (QQMQEEGNENP) are compositionally biased toward polar residues. The helical transmembrane segment at 70–90 (WLLAILANMGFMISFGIRCNF) threads the bilayer. Residues 91–121 (GAAKTHMYKNYTDPYGKVHMHEFNWTIDELS) are Extracellular-facing. Asn-100 and Asn-114 each carry an N-linked (GlcNAc...) asparagine glycan. Residues 122-142 (VMESSYFYGYLVTQIPAGFLA) traverse the membrane as a helical segment. At 143–150 (AKFPPNKL) the chain is on the cytoplasmic side. A helical membrane pass occupies residues 151-171 (FGFGIGVGAFLNILLPYGFKV). The Extracellular segment spans residues 172 to 174 (KSD). A helical membrane pass occupies residues 175–195 (YLVAFIQITQGLVQGVCYPAM). The Cytoplasmic segment spans residues 196 to 213 (HGVWRYWAPPMERSKLAT). Residues 214-234 (TAFTGSYAGAVLGLPLSAFLV) traverse the membrane as a helical segment. Residues 235 to 239 (SYVSW) are Extracellular-facing. Residues 240–260 (AAPFYLYGVCGVIWAILWFCV) traverse the membrane as a helical segment. The Cytoplasmic portion of the chain corresponds to 261-305 (TFEKPAFHPTISQEEKIFIEDAIGHVSNTHPTIRSIPWKAIVTSK). A helical transmembrane segment spans residues 306–325 (PVWAIIVANFARSWTFYLLL). Over 326-344 (QNQLTYMKEALGMKIADSG) the chain is Extracellular. Residues 345–365 (LLAAIPHLVMGCVVLMGGQLA) traverse the membrane as a helical segment. Residues 366–381 (DYLRSNKILSTTAVRK) are Cytoplasmic-facing. Residues 382-402 (IFNCGGFGGEAAFMLIVAYTT) traverse the membrane as a helical segment. Residues 403–406 (SDTT) are Extracellular-facing. Residues 407 to 427 (AIMALIAAVGMSGFAISGFNV) form a helical membrane-spanning segment. Residues 428 to 437 (NHLDIAPRYA) are Cytoplasmic-facing. The chain crosses the membrane as a helical span at residues 438 to 458 (AILMGFSNGIGTLAGLTCPFV). At 459-471 (TEAFTAHSKHGWT) the chain is on the extracellular side. The helical transmembrane segment at 472 to 492 (SVFLLASLIHFTGVTFYAVYA) threads the bilayer. The Cytoplasmic portion of the chain corresponds to 493–576 (SGELQEWAEP…VVENPHYQQW (84 aa)).

This sequence belongs to the major facilitator superfamily. Sodium/anion cotransporter family. VGLUT subfamily. In terms of tissue distribution, expressed in neurons of the pharynx and the extrapharyngeal nervous system. Highly expressed in male PHC sensory neurons.

It is found in the cell membrane. Its subcellular location is the synapse. Required for glutamatergic synaptic transmission. In AWB and AWC sensory neurons, required for the detection of preferred food sources, probably via glutamatergic neurotransmission from sensory neurons. Negatively regulates the turning step of male mating behavior. This is Probable vesicular glutamate transporter eat-4 from Caenorhabditis elegans.